We begin with the raw amino-acid sequence, 445 residues long: Phosphoglucosamine mutase (445 aa).

Ser-102 functions as the Phosphoserine intermediate in the catalytic mechanism. Positions 102, 241, 243, and 245 each coordinate Mg(2+). Phosphoserine is present on Ser-102.

This sequence belongs to the phosphohexose mutase family. Requires Mg(2+) as cofactor. Post-translationally, activated by phosphorylation.

The enzyme catalyses alpha-D-glucosamine 1-phosphate = D-glucosamine 6-phosphate. In terms of biological role, catalyzes the conversion of glucosamine-6-phosphate to glucosamine-1-phosphate. The chain is Phosphoglucosamine mutase from Cronobacter sakazakii (strain ATCC BAA-894) (Enterobacter sakazakii).